We begin with the raw amino-acid sequence, 581 residues long: Laccase-2 (581 aa).

An N-terminal signal peptide occupies residues 1-19 (MKYSTVFTALTALFAQASA). Plastocyanin-like domains are found at residues 74 to 191 (SVEN…GPAT) and 197 to 353 (DVGA…YDSS). 3 N-linked (GlcNAc...) asparagine glycosylation sites follow: asparagine 77, asparagine 93, and asparagine 120. Histidine 125, histidine 127, histidine 169, and histidine 171 together coordinate Cu cation. A disulfide bridge links cysteine 146 with cysteine 562. N-linked (GlcNAc...) asparagine glycosylation is found at asparagine 232, asparagine 283, asparagine 343, asparagine 408, asparagine 427, and asparagine 441. The 135-residue stretch at 413–547 (LLDWSSPTTL…AMQFVESQSS (135 aa)) folds into the Plastocyanin-like 3 domain. Cu cation contacts are provided by histidine 464, histidine 467, histidine 469, histidine 526, cysteine 527, histidine 528, and histidine 532.

The protein belongs to the multicopper oxidase family. Requires Cu cation as cofactor.

It localises to the secreted. It carries out the reaction 4 hydroquinone + O2 = 4 benzosemiquinone + 2 H2O. Lignin degradation and detoxification of lignin-derived products. The protein is Laccase-2 (lcc2) of Botryotinia fuckeliana (Noble rot fungus).